The chain runs to 303 residues: E3 ubiquitin-protein ligase CCNB1IP1 homolog (303 aa).

The RING-type; degenerate zinc-finger motif lies at 3-42; sequence CNACWRELEGQAVSTTCGHLLCTEDAKKILSNDAACPICD. Residues 119 to 184 are a coiled coil; it reads LEEVHTAYQK…YESAKRSAIQ (66 aa). Positions 201 to 268 are disordered; sequence VPNIMDSSDP…DIRPRQPARP (68 aa).

As to quaternary structure, interacts with ZIP4 and PTD. Expressed in young panicles.

It is found in the nucleus. The protein resides in the chromosome. The enzyme catalyses S-ubiquitinyl-[E2 ubiquitin-conjugating enzyme]-L-cysteine + [acceptor protein]-L-lysine = [E2 ubiquitin-conjugating enzyme]-L-cysteine + N(6)-ubiquitinyl-[acceptor protein]-L-lysine.. Its pathway is protein modification; protein ubiquitination. Ubiquitin E3 ligase required for class I crossover (CO) formation during meiosis. The polypeptide is E3 ubiquitin-protein ligase CCNB1IP1 homolog (Oryza sativa subsp. japonica (Rice)).